A 353-amino-acid polypeptide reads, in one-letter code: (3aS,4S,5R,7aS)-5-hydroxy-7a-methyl-1-oxo-octahydro-1H-indene-4-carboxyl-CoA dehydrogenase (353 aa).

Residues 22-24 (GMG), 171-173 (AGG), and 194-195 (GT) each bind FMN.

The protein belongs to the nitronate monooxygenase family.

The catalysed reaction is (3aS,4S,5R,7aS)-5-hydroxy-7a-methyl-1-oxo-octahydro-1H-indene-4-carboxyl-CoA + NAD(+) = (5R,7aS)-5-hydroxy-7a-methyl-1-oxo-2,3,5,6,7,7a-hexahydro-1H-indene-carboxyl-CoA + NADH + H(+). It participates in steroid metabolism; cholesterol degradation. Its function is as follows. Involved in the final steps of cholesterol and steroid degradation. Probably catalyzes the introduction of a double bound into the C ring of 5OH-HIC-CoA, leading to the formation of (5R,7aS)-5-hydroxy-7a-methyl-1-oxo-3,5,6,7-tetrahydro-2H-indene-4-carboxyl-CoA. The chain is (3aS,4S,5R,7aS)-5-hydroxy-7a-methyl-1-oxo-octahydro-1H-indene-4-carboxyl-CoA dehydrogenase from Rhodococcus jostii (strain RHA1).